We begin with the raw amino-acid sequence, 78 residues long: Short neurotoxin SNTX26 (78 aa).

A signal peptide spans 1-21; it reads MKTLLLTFLVVTIVCLDLGYT. 4 disulfides stabilise this stretch: C24–C40, C33–C58, C62–C70, and C71–C76.

The protein belongs to the three-finger toxin family. Short-chain subfamily. In terms of tissue distribution, expressed by the venom gland.

The protein resides in the secreted. In terms of biological role, this three-finger toxin binds and inhibits the nicotinic acetylcholine receptor (nAChR). This Ophiophagus hannah (King cobra) protein is Short neurotoxin SNTX26.